Here is a 109-residue protein sequence, read N- to C-terminus: Thioredoxin (109 aa).

Residues 2–107 (SISQVIDTSF…LLNTLQKHLK (106 aa)) form the Thioredoxin domain. Catalysis depends on nucleophile residues Cys31 and Cys34. Cysteines 31 and 34 form a disulfide.

Belongs to the thioredoxin family.

Its subcellular location is the plastid. The protein localises to the chloroplast. Its function is as follows. Participates in various redox reactions through the reversible oxidation of its active center dithiol to a disulfide and catalyzes dithiol-disulfide exchange reactions. The chain is Thioredoxin (trxA) from Griffithsia pacifica (Red alga).